A 687-amino-acid polypeptide reads, in one-letter code: MSCKEHKVVHEAHNVEARKTPDHFYRSQPGPSYVQDIEQYRTMYQQSIEDPDAFFGEKAREFLHWEKDFTHVRAGSLRTGDTAWFLNGELNAAYNCVDRHALENPDKVAIIYEADDEADNRVVTFGELLRQVSQVAGVLQSWGVKKGDTVAVYMPMIPEAVVAMLAVARLGAVHSVIFAGFSSGSLRDRIVDAESKVVITCDEGRRGGKTVHTKKIVDEGLAGVGVVSHILVFQRTGSEGIPMKAGRDFWWHEEVRKQRGYLPPVSVNAEDPIFLLYTSGSTGSPKGVVHTTGGYLLGAALTTRYVFDIHPEDVLFTAGDVGWITGHTYALYGPLCLGTATIIFESTPAYPDYGRYWRIIQRHKATHFYVAPTAMRLIKTVGEQEISKYDLSSLRVLGSVGEPIAPDLWEWYNEKVGNNNCVVCDTMWQTESGSHLIAPLAGAIPTKPGSATVPFFGINACIIDPVTGDELEGNDVEGVLAIKSPWPSMARSVWNNHDRYIETYLKPYPGYYFTGDGAGRDHDGYYWIRGRVDDVVNVSGHRLSTAEIEAALSEHEGVSQAAVVGIADELTGQAVVAFVSLKEGYGRGSSTDTDPESIAPDVVPLDTLRRELVLQVRAEIGPFAAPKSVIVVDDLPKTRSGKIMRRTLRKISANEADQLGDLSTLANPETVPAIIAAVGAQFLKGKK.

CoA contacts are provided by residues 206 to 209 and T325; that span reads RGGK. Residues 401-403, 425-430, D516, and R531 contribute to the ATP site; these read GEP and DTMWQT. CoA is bound at residue S539. R542 is a binding site for ATP. Residue R617 coordinates CoA.

The protein belongs to the ATP-dependent AMP-binding enzyme family.

It catalyses the reaction acetate + ATP + CoA = acetyl-CoA + AMP + diphosphate. This chain is Acetyl-coenzyme A synthetase 2 (ACS2), found in Eremothecium gossypii (strain ATCC 10895 / CBS 109.51 / FGSC 9923 / NRRL Y-1056) (Yeast).